The primary structure comprises 137 residues: MSDSAGLIAHNWGFAIFLLGVVGLCAFMLGLSSLLGSKAWGRAKNEPFESGMLPVGSARLRLSAKFYLVAMLFVIFDIEALFLFAWSVSVRESGWTGFVEALVFIAILLAGLVYLWRVGALDWAPEGRRKRQAKLKQ.

3 helical membrane-spanning segments follow: residues 12-32, 66-86, and 95-115; these read WGFA…LGLS, FYLV…LFAW, and WTGF…LVYL.

This sequence belongs to the complex I subunit 3 family. As to quaternary structure, NDH-1 is composed of 13 different subunits. Subunits NuoA, H, J, K, L, M, N constitute the membrane sector of the complex.

It is found in the cell inner membrane. The catalysed reaction is a quinone + NADH + 5 H(+)(in) = a quinol + NAD(+) + 4 H(+)(out). In terms of biological role, NDH-1 shuttles electrons from NADH, via FMN and iron-sulfur (Fe-S) centers, to quinones in the respiratory chain. The immediate electron acceptor for the enzyme in this species is believed to be ubiquinone. Couples the redox reaction to proton translocation (for every two electrons transferred, four hydrogen ions are translocated across the cytoplasmic membrane), and thus conserves the redox energy in a proton gradient. The sequence is that of NADH-quinone oxidoreductase subunit A from Pseudomonas putida (strain ATCC 700007 / DSM 6899 / JCM 31910 / BCRC 17059 / LMG 24140 / F1).